Consider the following 443-residue polypeptide: Glutamyl-tRNA reductase (443 aa).

Substrate is bound by residues 49–52 (TCNR), S109, 114–116 (EPQ), and Q120. C50 (nucleophile) is an active-site residue. Position 189–194 (189–194 (GAGKMC)) interacts with NADP(+). The tract at residues 421–443 (PDSQQTGGDSVEKDADSKQDLTS) is disordered. A compositionally biased stretch (basic and acidic residues) spans 430–443 (SVEKDADSKQDLTS).

It belongs to the glutamyl-tRNA reductase family. Homodimer.

The catalysed reaction is (S)-4-amino-5-oxopentanoate + tRNA(Glu) + NADP(+) = L-glutamyl-tRNA(Glu) + NADPH + H(+). The protein operates within porphyrin-containing compound metabolism; protoporphyrin-IX biosynthesis; 5-aminolevulinate from L-glutamyl-tRNA(Glu): step 1/2. Catalyzes the NADPH-dependent reduction of glutamyl-tRNA(Glu) to glutamate 1-semialdehyde (GSA). This chain is Glutamyl-tRNA reductase, found in Syntrophotalea carbinolica (strain DSM 2380 / NBRC 103641 / GraBd1) (Pelobacter carbinolicus).